A 178-amino-acid polypeptide reads, in one-letter code: Ribosome maturation factor RimM (178 aa).

One can recognise a PRC barrel domain in the interval 101-178 (ADEYYWYQLV…VMRVEWDADF (78 aa)).

The protein belongs to the RimM family. Binds ribosomal protein uS19.

Its subcellular location is the cytoplasm. In terms of biological role, an accessory protein needed during the final step in the assembly of 30S ribosomal subunit, possibly for assembly of the head region. Essential for efficient processing of 16S rRNA. May be needed both before and after RbfA during the maturation of 16S rRNA. It has affinity for free ribosomal 30S subunits but not for 70S ribosomes. This Pseudomonas putida (strain ATCC 700007 / DSM 6899 / JCM 31910 / BCRC 17059 / LMG 24140 / F1) protein is Ribosome maturation factor RimM.